The primary structure comprises 426 residues: MKKISQVLNWLSSLKIAILLLLVIAVSCAAGTLIPQQESNQFYYDNFNKNPFLGIINAKILLLFEFDHVYTSFWFLFLLIWLGLALSVCSFRRQLPILKSALNWIDYKSPSQIAKLSVAQTIVTNNCAKSLEKIKLNLKKQGWNVKETDGRIAARQGVIGRLGPILIHLGMILLMIGATYGSLNGKTIEKFLAPGRSIDLLNNNEEKGLTIELQKFQIERDPQGRAEQYKSIVNVIEPNGNNQSKEISVNYPLRYKGLTLYQADWSLAAITIKIDNSPKLQIPIKPISELGEQVWGTIIPTNKDGKNQILLTVDSELGPVNIYDNDGTLLTKLIINKEEKVKGALIKIINIIPSSGLLLKHDPGVPFVYLSFAIILIGGSLSIISTKKIWVLHENEKSMIYIGGLSNRNLSGLSKELPNLISFLET.

Helical transmembrane passes span 14 to 34 (LKIA…GTLI), 72 to 92 (SFWF…CSFR), and 162 to 182 (LGPI…TYGS).

It belongs to the Ccs1/CcsB family. As to quaternary structure, may interact with CcsA.

Its subcellular location is the cellular thylakoid membrane. In terms of biological role, required during biogenesis of c-type cytochromes (cytochrome c6 and cytochrome f) at the step of heme attachment. The chain is Cytochrome c biogenesis protein CcsB from Prochlorococcus marinus (strain NATL2A).